The chain runs to 285 residues: Energy-coupling factor transporter ATP-binding protein EcfA2 (285 aa).

Residues 6-242 enclose the ABC transporter domain; the sequence is LKVEELNYNY…KEVIRKVNLR (237 aa). 39–46 contacts ATP; the sequence is GGNGVGKS.

This sequence belongs to the ABC transporter superfamily. Energy-coupling factor EcfA family. Forms a stable energy-coupling factor (ECF) transporter complex composed of 2 membrane-embedded substrate-binding proteins (S component), 2 ATP-binding proteins (A component) and 2 transmembrane proteins (T component).

It localises to the cell membrane. In terms of biological role, ATP-binding (A) component of a common energy-coupling factor (ECF) ABC-transporter complex. Unlike classic ABC transporters this ECF transporter provides the energy necessary to transport a number of different substrates. The chain is Energy-coupling factor transporter ATP-binding protein EcfA2 from Clostridium perfringens (strain SM101 / Type A).